The sequence spans 270 residues: MSTGQEARRDEGDSRKEQEASLRDRAHLSQQRQLKQATQFLHKDSADLLPLDSLKRLGTSKDLQPHSVIQRRLVEGNQRRLQGESPLLQALIRGHDSSRTSATQVPALLVNCKCQDQMLRVAVDTGTQHNQISAGCLRRLGLGKRVPKAPGGDVAPEPPTQVEQLELELGQETVACSAQVVDVDSPEFCLGLQTLLSLKLATSLSASSLLPSALGIPTESICDSEALVPHSLLSLPKCTTKSLTEKDLQQMGSRLHPGCRGQSYLLPPLA.

The span at 1–27 (MSTGQEARRDEGDSRKEQEASLRDRAH) shows a compositional bias: basic and acidic residues. The tract at residues 1–33 (MSTGQEARRDEGDSRKEQEASLRDRAHLSQQRQ) is disordered. Positions 61-99 (KDLQPHSVIQRRLVEGNQRRLQGESPLLQALIRGHDSSR) are interaction with NR1F2. An LXXLL motif motif is present at residues 192–196 (LQTLL).

In terms of assembly, interacts with NR1F2, RARA and THRB in a ligand-dependent manner. Expression is restricted to the central nervous system (neurons in the dentate gyrus of the hippocampus, the amygdala, thalamic and hypothalamic regions).

Its subcellular location is the nucleus. In terms of biological role, down-regulates transcriptional activation by nuclear receptors, such as NR1F2. The chain is Nuclear receptor-interacting protein 2 (Nrip2) from Mus musculus (Mouse).